Reading from the N-terminus, the 485-residue chain is Glutamate--tRNA ligase 1 (485 aa).

The 'HIGH' region motif lies at 10–20; that stretch reads PSPTGAIHIGN. The 'KMSKS' region signature appears at 252–256; it reads KLSKR. Lysine 255 contacts ATP.

Belongs to the class-I aminoacyl-tRNA synthetase family. Glutamate--tRNA ligase type 1 subfamily. In terms of assembly, monomer.

Its subcellular location is the cytoplasm. The enzyme catalyses tRNA(Glu) + L-glutamate + ATP = L-glutamyl-tRNA(Glu) + AMP + diphosphate. Functionally, catalyzes the attachment of glutamate to tRNA(Glu) in a two-step reaction: glutamate is first activated by ATP to form Glu-AMP and then transferred to the acceptor end of tRNA(Glu). The sequence is that of Glutamate--tRNA ligase 1 from Thermoanaerobacter pseudethanolicus (strain ATCC 33223 / 39E) (Clostridium thermohydrosulfuricum).